The following is a 583-amino-acid chain: Isocitrate dehydrogenase kinase/phosphatase (583 aa).

Residues 315–321 (APGIRGM) and Lys336 contribute to the ATP site. The active site involves Asp371.

The protein belongs to the AceK family.

The protein localises to the cytoplasm. It carries out the reaction L-seryl-[isocitrate dehydrogenase] + ATP = O-phospho-L-seryl-[isocitrate dehydrogenase] + ADP + H(+). Functionally, bifunctional enzyme which can phosphorylate or dephosphorylate isocitrate dehydrogenase (IDH) on a specific serine residue. This is a regulatory mechanism which enables bacteria to bypass the Krebs cycle via the glyoxylate shunt in response to the source of carbon. When bacteria are grown on glucose, IDH is fully active and unphosphorylated, but when grown on acetate or ethanol, the activity of IDH declines drastically concomitant with its phosphorylation. This chain is Isocitrate dehydrogenase kinase/phosphatase, found in Salmonella paratyphi C (strain RKS4594).